The following is a 330-amino-acid chain: Flotillin-like protein FloA (330 aa).

Transmembrane regions (helical) follow at residues 6 to 26 (LLLF…FTFV) and 28 to 48 (VMLW…TLVG).

It belongs to the flotillin-like FloA family. Homooligomerizes.

It localises to the cell membrane. The protein localises to the membrane raft. In terms of biological role, found in functional membrane microdomains (FMM) that may be equivalent to eukaryotic membrane rafts. FMMs are highly dynamic and increase in number as cells age. Flotillins are thought to be important factors in membrane fluidity. This is Flotillin-like protein FloA from Bacillus pumilus (strain SAFR-032).